A 579-amino-acid chain; its full sequence is Glutamine--tRNA ligase (579 aa).

Positions 41 to 51 match the 'HIGH' region motif; it reads PEPNGYLHIGH. ATP-binding positions include 42-44 and 48-54; these read EPN and HIGHAKA. Residues Asp74 and Tyr218 each contribute to the L-glutamine site. ATP-binding positions include Thr237, 285–286, and 293–295; these read RL and MSK. The 'KMSKS' region signature appears at 292-296; that stretch reads VMSKR.

This sequence belongs to the class-I aminoacyl-tRNA synthetase family. In terms of assembly, monomer.

The protein resides in the cytoplasm. It catalyses the reaction tRNA(Gln) + L-glutamine + ATP = L-glutaminyl-tRNA(Gln) + AMP + diphosphate. The protein is Glutamine--tRNA ligase of Xanthomonas axonopodis pv. citri (strain 306).